Here is a 578-residue protein sequence, read N- to C-terminus: Proline--tRNA ligase (578 aa).

Belongs to the class-II aminoacyl-tRNA synthetase family. ProS type 1 subfamily. As to quaternary structure, homodimer.

Its subcellular location is the cytoplasm. The catalysed reaction is tRNA(Pro) + L-proline + ATP = L-prolyl-tRNA(Pro) + AMP + diphosphate. Its function is as follows. Catalyzes the attachment of proline to tRNA(Pro) in a two-step reaction: proline is first activated by ATP to form Pro-AMP and then transferred to the acceptor end of tRNA(Pro). As ProRS can inadvertently accommodate and process non-cognate amino acids such as alanine and cysteine, to avoid such errors it has two additional distinct editing activities against alanine. One activity is designated as 'pretransfer' editing and involves the tRNA(Pro)-independent hydrolysis of activated Ala-AMP. The other activity is designated 'posttransfer' editing and involves deacylation of mischarged Ala-tRNA(Pro). The misacylated Cys-tRNA(Pro) is not edited by ProRS. In Brachyspira hyodysenteriae (strain ATCC 49526 / WA1), this protein is Proline--tRNA ligase.